We begin with the raw amino-acid sequence, 154 residues long: Large ribosomal subunit protein uL13 (154 aa).

The protein belongs to the universal ribosomal protein uL13 family. In terms of assembly, part of the 50S ribosomal subunit.

This protein is one of the early assembly proteins of the 50S ribosomal subunit, although it is not seen to bind rRNA by itself. It is important during the early stages of 50S assembly. The polypeptide is Large ribosomal subunit protein uL13 (Bartonella tribocorum (strain CIP 105476 / IBS 506)).